A 542-amino-acid polypeptide reads, in one-letter code: Neurofilament light polypeptide (542 aa).

Ser-2 is modified (N-acetylserine). The head stretch occupies residues 2 to 93 (SSFSYEPYFS…KSIRTQEKAQ (92 aa)). A glycan (O-linked (GlcNAc) threonine) is linked at Thr-21. Arg-23 carries the asymmetric dimethylarginine; alternate modification. Arg-23 carries the post-translational modification Omega-N-methylarginine; alternate. The O-linked (GlcNAc) serine glycan is linked to Ser-27. Arg-30 is subject to Omega-N-methylarginine. Tyr-43 carries the phosphotyrosine modification. Residues Ser-56, Ser-67, and Ser-103 each carry the phosphoserine modification. Residues 90 to 401 (EKAQLQDLND…KLLEGEETRL (312 aa)) form the IF rod domain. Positions 94–125 (LQDLNDRFASFIERVHELEQQNKVLEAELLVL) are coil 1A. Positions 126-138 (RQKHSEPSRFRAL) are linker 1. The interval 139 to 234 (YEQEIRDLRL…KVHEEEIAEL (96 aa)) is coil 1B. Residues 235 to 253 (QAQIQYAQISVEMDVSSKP) form a linker 12 region. A coil 2A region spans residues 254 to 272 (DLSAALKDIRAQYEKLAAK). The segment at 273-281 (NMQNAEEWF) is linker 2. The tract at residues 282-397 (KSRFTVLTES…AAYRKLLEGE (116 aa)) is coil 2B. Positions 382 to 392 (ALDIEIAAYRK) are epitope; recognized by IF-specific monoclonal antibody. The segment at 398–444 (ETRLSFTSVGSITSGYSQSSQVFGRSAYSGLQSSSYLMSARAFPAYY) is tail, subdomain A. The tail stretch occupies residues 398 to 542 (ETRLSFTSVG…GEEQAAKKKD (145 aa)). A tail, subdomain B (acidic) region spans residues 445 to 542 (TSHVQEEQSE…GEEQAAKKKD (98 aa)). Residues 451-542 (EQSEVEETIE…GEEQAAKKKD (92 aa)) are disordered. Ser-453 carries the post-translational modification Phosphoserine. The span at 460–471 (EATKAEEAKDEP) shows a compositional bias: basic and acidic residues. A compositionally biased stretch (acidic residues) spans 472 to 527 (PSEGEAEEEEKEKEEGEEEEGAEEEEAAKDESEDAKEEEGGEGEEEDTKESEEEEK). Phosphoserine is present on residues Ser-473 and Ser-503. Thr-519 carries the phosphothreonine modification. Ser-522 and Ser-531 each carry phosphoserine. Over residues 528-542 (KEESAGEEQAAKKKD) the composition is skewed to basic and acidic residues.

It belongs to the intermediate filament family. Forms homodimers (in vitro). Forms heterodimers with NEFH or NEFM; which can further hetero-oligomerize (in vitro). Forms heterodimers with INA (in vitro). Interacts with ARHGEF28. Interacts with TRIM2. Post-translationally, O-glycosylated; contains three N-acetylglucosamine side chains. In terms of processing, phosphorylated in the head and rod regions by the PKC kinase PKN1, leading to the inhibition of polymerization. Ubiquitinated in the presence of TRIM2 and UBE2D1. As to expression, expressed in the dorsal root ganglion neurons (at protein level).

The protein resides in the cell projection. Its subcellular location is the axon. The protein localises to the cytoplasm. It localises to the cytoskeleton. Its function is as follows. Neurofilaments usually contain three intermediate filament proteins: NEFL, NEFM, and NEFH which are involved in the maintenance of neuronal caliber. May additionally cooperate with the neuronal intermediate filament proteins PRPH and INA to form neuronal filamentous networks. This chain is Neurofilament light polypeptide (Nefl), found in Rattus norvegicus (Rat).